The chain runs to 283 residues: DegV domain-containing protein BH3627 (283 aa).

One can recognise a DegV domain in the interval 4–281 (IAIVTDSTAY…EGSIGLSWYI (278 aa)). Hexadecanoate is bound by residues Thr-62 and Ser-95.

In terms of biological role, may bind long-chain fatty acids, such as palmitate, and may play a role in lipid transport or fatty acid metabolism. This Halalkalibacterium halodurans (strain ATCC BAA-125 / DSM 18197 / FERM 7344 / JCM 9153 / C-125) (Bacillus halodurans) protein is DegV domain-containing protein BH3627.